Consider the following 140-residue polypeptide: Ribosomal RNA large subunit methyltransferase H (140 aa).

Residues Leu-58, Gly-90, and 108-113 (LSLLTF) each bind S-adenosyl-L-methionine.

Belongs to the RNA methyltransferase RlmH family. Homodimer.

Its subcellular location is the cytoplasm. The enzyme catalyses pseudouridine(1915) in 23S rRNA + S-adenosyl-L-methionine = N(3)-methylpseudouridine(1915) in 23S rRNA + S-adenosyl-L-homocysteine + H(+). Specifically methylates the pseudouridine at position 1915 (m3Psi1915) in 23S rRNA. The protein is Ribosomal RNA large subunit methyltransferase H of Protochlamydia amoebophila (strain UWE25).